The primary structure comprises 1055 residues: Ubiquitin carboxyl-terminal hydrolase 25 (1055 aa).

The region spanning 14–57 is the UBA-like domain; it reads QKHQQTFLNQLREITGINDTQILQQALKDSNGNLELAVAFLTAK. Positions 77–102 are SUMO interaction domain (SIM); that stretch reads NDRYISVGSQADTNVIDLTGDDKDDL. S85 carries the post-translational modification Phosphoserine. A Required for SUMO paralog-specific binding motif is present at residues 89-95; that stretch reads TNVIDLT. UIM domains are found at residues 97-116 and 123-140; these read DDKD…SNRA and TDEE…IAEN. K99 participates in a covalent cross-link: Glycyl lysine isopeptide (Lys-Gly) (interchain with G-Cter in SUMO); alternate. A Glycyl lysine isopeptide (Lys-Gly) (interchain with G-Cter in ubiquitin); alternate cross-link involves residue K99. Residues 169–657 enclose the USP domain; sequence VGLKNVGNTC…SAYCLMYIND (489 aa). C178 is a catalytic residue. The interval 464–507 is disordered; the sequence is VCTSPVDDIDASSPPSGSIPSQTLPSTTEQQGALSSELPSTSPS. Over residues 476–496 the composition is skewed to polar residues; the sequence is SPPSGSIPSQTLPSTTEQQGA. Positions 497–507 are enriched in low complexity; sequence LSSELPSTSPS. Residues 541 to 578 are a coiled coil; it reads TEEELSVLESCLHRWRTEIENDTRDLQESISRIHRTIE. Active-site residues include H599 and H607. Residues 684-717 are a coiled coil; it reads DLRDFVEEDNQRFEKELEEWDAQLAQKALQEKLL. Residues 727-749 form a disordered region; the sequence is TSVTTAQAAGDPEYLEQPSRSDF. Y740 bears the Phosphotyrosine mark.

This sequence belongs to the peptidase C19 family. Homotetramer, inhibited form. Homodimer, active form. Interacts with ACTA1 (via its C-terminus); the interaction occurs for all isoforms but is strongest for isoform USP25m in muscle differentiating cells. Interacts (isoform USP25m only) with MYBPC1; the interaction prevents proteasomal degradation of MYBPC1. Interacts (isoform USP25m only) with FLNC (via filament repeats 17-18, 20-21 and 24). Interacts with GAPDH. Interacts with SUMO3; the interaction sumoylates efficiently USP25. Interacts with SUMO2; the interaction sumoylates efficiently USP25. Interacts with SUMO1; the interaction only weakly sumoylates USP25. Interacts with SYK; phosphorylates USP25 and regulates USP25 intracellular levels. In terms of processing, acetylated. Post-translationally, sumoylation impairs binding to and hydrolysis of ubiquitin chains. Sumoylated preferentially with SUMO2 or SUMO3. Desumoylated by SENP1. Polyubiquitinated by SMURF1 by promoting the 'Lys-48'-linkage leading to proteasomal degradation. Preferentially monoubiquitinated but can also be polyubiquitinated. Autodeubiquitinated. Ubiquitination activates the enzymatic activity either by preventing sumoylation or by allowing novel interactions. In terms of processing, phosphorylation in the C-terminal by SYK regulates USP25 cellular levels. In terms of tissue distribution, isoform USP25a is found in most adult and fetal tissues; expression is moderately high in testis, pancreas, kidney, skeletal muscle, liver, lung, placenta, heart, but very low in peripheral blood, colon, small intestine, ovary, prostate, thymus and spleen. Expressed in the brain, with high levels in the cerebral cortex. Isoform USP25b is found in all tissues except heart and skeletal muscle. Isoform USP25m is heart and skeletal muscle specific.

Its subcellular location is the cytoplasm. The protein localises to the nucleus. The enzyme catalyses Thiol-dependent hydrolysis of ester, thioester, amide, peptide and isopeptide bonds formed by the C-terminal Gly of ubiquitin (a 76-residue protein attached to proteins as an intracellular targeting signal).. Its function is as follows. Deubiquitinating enzyme that hydrolyzes ubiquitin moieties conjugated to substrates and thus, functions in various biological processes including inflammation and immune response. Modulates the Wnt/beta-catenin pathway by deubiquitinating and stabilizing tankyrases TNKS1 and TNKS2. Regulates KEAP1-NRF2 axis in the defense against oxidative assaults by deubiquitinating KEAP1 and protecting it from degradation leading to degradation of the NRF2 transcription factor that is responsible for mounting an anti-oxidation gene expression program. Positively regulates RNA virus-induced innate signaling by interacting with and deubiquitinating ERLIN1 and ERLIN2. In turn, restricts virus production by regulating cholesterol biosynthetic flux. Acts as a negative regulator of interleukin-17-mediated signaling and inflammation through the removal of 'Lys-63'-linked ubiquitination of TRAF5 and TRAF6. Prevents the ubiquitination and degradation of TRAF3 to reduce the phosphorylation levels of JNK and P38, the secretion of IL-1B and to induce endotoxin tolerance. Functionally, the muscle-specific isoform (USP25m) may have a role in the regulation of muscular differentiation and function. This chain is Ubiquitin carboxyl-terminal hydrolase 25 (USP25), found in Homo sapiens (Human).